Consider the following 592-residue polypeptide: Aspartate--tRNA(Asp/Asn) ligase (592 aa).

Glu-175 contributes to the L-aspartate binding site. An aspartate region spans residues 199–202 (QLFK). L-aspartate is bound at residue Arg-221. ATP is bound by residues 221–223 (RDE) and Gln-230. His-450 serves as a coordination point for L-aspartate. ATP is bound at residue Glu-483. Arg-490 contacts L-aspartate. ATP is bound at residue 535 to 538 (GLDR).

The protein belongs to the class-II aminoacyl-tRNA synthetase family. Type 1 subfamily. As to quaternary structure, homodimer.

The protein resides in the cytoplasm. It catalyses the reaction tRNA(Asx) + L-aspartate + ATP = L-aspartyl-tRNA(Asx) + AMP + diphosphate. Its function is as follows. Aspartyl-tRNA synthetase with relaxed tRNA specificity since it is able to aspartylate not only its cognate tRNA(Asp) but also tRNA(Asn). Reaction proceeds in two steps: L-aspartate is first activated by ATP to form Asp-AMP and then transferred to the acceptor end of tRNA(Asp/Asn). The protein is Aspartate--tRNA(Asp/Asn) ligase of Acinetobacter baylyi (strain ATCC 33305 / BD413 / ADP1).